A 394-amino-acid chain; its full sequence is Na(+)/H(+) antiporter NhaA 2 (394 aa).

The next 11 helical transmembrane spans lie at 13-33 (FGGV…NGFL), 58-78 (LILW…GLEL), 93-113 (IALP…IFWA), 124-144 (GWAI…MLLG), 153-173 (IFLL…IAIF), 176-196 (TKLS…LWVL), 208-228 (ILVT…ATIA), 260-280 (YFIL…GVQI), 291-311 (IFFG…YIFI), 327-347 (FYGV…VNSL), and 361-381 (LGIL…LLVF).

This sequence belongs to the NhaA Na(+)/H(+) (TC 2.A.33) antiporter family.

The protein localises to the cell inner membrane. It carries out the reaction Na(+)(in) + 2 H(+)(out) = Na(+)(out) + 2 H(+)(in). In terms of biological role, na(+)/H(+) antiporter that extrudes sodium in exchange for external protons. In Campylobacter fetus subsp. fetus (strain 82-40), this protein is Na(+)/H(+) antiporter NhaA 2.